We begin with the raw amino-acid sequence, 569 residues long: Formate--tetrahydrofolate ligase (569 aa).

An ATP-binding site is contributed by 64-71 (TPHGEGKT).

Belongs to the formate--tetrahydrofolate ligase family.

It carries out the reaction (6S)-5,6,7,8-tetrahydrofolate + formate + ATP = (6R)-10-formyltetrahydrofolate + ADP + phosphate. Its pathway is one-carbon metabolism; tetrahydrofolate interconversion. This chain is Formate--tetrahydrofolate ligase, found in Shewanella sp. (strain MR-7).